We begin with the raw amino-acid sequence, 198 residues long: ATP-dependent Clp protease proteolytic subunit (198 aa).

The active-site Nucleophile is Ser98. His123 is a catalytic residue.

Belongs to the peptidase S14 family. Fourteen ClpP subunits assemble into 2 heptameric rings which stack back to back to give a disk-like structure with a central cavity, resembling the structure of eukaryotic proteasomes.

It localises to the cytoplasm. It catalyses the reaction Hydrolysis of proteins to small peptides in the presence of ATP and magnesium. alpha-casein is the usual test substrate. In the absence of ATP, only oligopeptides shorter than five residues are hydrolyzed (such as succinyl-Leu-Tyr-|-NHMec, and Leu-Tyr-Leu-|-Tyr-Trp, in which cleavage of the -Tyr-|-Leu- and -Tyr-|-Trp bonds also occurs).. In terms of biological role, cleaves peptides in various proteins in a process that requires ATP hydrolysis. Has a chymotrypsin-like activity. Plays a major role in the degradation of misfolded proteins. The chain is ATP-dependent Clp protease proteolytic subunit from Bacillus velezensis (strain DSM 23117 / BGSC 10A6 / LMG 26770 / FZB42) (Bacillus amyloliquefaciens subsp. plantarum).